The primary structure comprises 130 residues: uncharacterized protein (130 aa).

An N-terminal signal peptide occupies residues 1 to 26; that stretch reads MKFIYKLLFILSIVLFLFNNIITING. An N-linked (GlcNAc...) asparagine glycan is attached at N88.

Its subcellular location is the secreted. This is an uncharacterized protein from Dictyostelium discoideum (Social amoeba).